Reading from the N-terminus, the 356-residue chain is uncharacterized protein (356 aa).

This sequence belongs to the NAD(P)-dependent epimerase/dehydratase family. NAD(+) is required as a cofactor. It depends on NADP(+) as a cofactor.

Its function is as follows. Putative nucleotide sugar epimerase/dehydrogenase. This is an uncharacterized protein from Sinorhizobium fredii (strain NBRC 101917 / NGR234).